Reading from the N-terminus, the 358-residue chain is Trace amine-associated receptor 7b (358 aa).

Over 1–47 (MATDDDRFPWDQDSILSRDLLSASSMQLCYEKLNRSCVRSPYSPGPR) the chain is Extracellular. Asn-34 carries an N-linked (GlcNAc...) asparagine glycan. Cystine bridges form between Cys-37-Cys-201 and Cys-120-Cys-205. A helical membrane pass occupies residues 48-68 (LILYAVFGFGAVLAVCGNLLV). The Cytoplasmic segment spans residues 69–83 (MTSILHFRQLHSPAN). The chain crosses the membrane as a helical span at residues 84-104 (FLVASLACADFLVGLTVMPFS). The Extracellular segment spans residues 105–125 (MVRSVEGCWYFGDIYCKFHSS). Residues 126–147 (FDGSFCYSSIFHLCFISADRYI) traverse the membrane as a helical segment. Residues 148–166 (AVSDPLIYPTRFTASVSGK) lie on the Cytoplasmic side of the membrane. The helical transmembrane segment at 167 to 187 (CITFSWLLSIIYSFSLFYTGV) threads the bilayer. Over 188-211 (NEAGLEDLVSALTCVGGCQIAVNQ) the chain is Extracellular. An N-linked (GlcNAc...) asparagine glycan is attached at Asn-210. Residues 212-232 (SWVFINFLLFLVPALVMMTVY) traverse the membrane as a helical segment. Residues 233-274 (SKIFLIAKQQAQNIEKMGKQTARASESYKDRVAKRERKAAKT) lie on the Cytoplasmic side of the membrane. A helical transmembrane segment spans residues 275 to 295 (LGIAVAAFLLSWLPYFIDSII). Residues 296–309 (DAFLGFVTPTYVYE) are Extracellular-facing. The helical transmembrane segment at 310-332 (ILVWIGYYNSAMNPLIYAFFYPW) threads the bilayer. At 333 to 358 (FRKAIKLIVTGKILRENSSATNLFPE) the chain is on the cytoplasmic side.

It belongs to the G-protein coupled receptor 1 family.

The protein localises to the cell membrane. Functionally, olfactory receptor specific for N,N-dimethylalkylamines trace amines, such as N,N-dimethylcyclohexylamine. Trace amine compounds are enriched in animal body fluids and act on trace amine-associated receptors (TAARs) to elicit both intraspecific and interspecific innate behaviors. Ligand-binding causes a conformation change that triggers signaling via G(s)-class of G alpha proteins (GNAL or GNAS). This is Trace amine-associated receptor 7b from Rattus norvegicus (Rat).